The chain runs to 265 residues: Shikimate dehydrogenase (NADP(+)) (265 aa).

Shikimate-binding positions include 14-16 (SLS) and threonine 61. Lysine 65 (proton acceptor) is an active-site residue. Residues asparagine 85 and aspartate 100 each coordinate shikimate. NADP(+) is bound by residues 123-127 (GAGGA), 146-151 (NRTESK), and alanine 209. Position 211 (tyrosine 211) interacts with shikimate. Residue glycine 232 participates in NADP(+) binding.

The protein belongs to the shikimate dehydrogenase family. Homodimer.

The enzyme catalyses shikimate + NADP(+) = 3-dehydroshikimate + NADPH + H(+). Its pathway is metabolic intermediate biosynthesis; chorismate biosynthesis; chorismate from D-erythrose 4-phosphate and phosphoenolpyruvate: step 4/7. Its function is as follows. Involved in the biosynthesis of the chorismate, which leads to the biosynthesis of aromatic amino acids. Catalyzes the reversible NADPH linked reduction of 3-dehydroshikimate (DHSA) to yield shikimate (SA). This chain is Shikimate dehydrogenase (NADP(+)), found in Haloarcula marismortui (strain ATCC 43049 / DSM 3752 / JCM 8966 / VKM B-1809) (Halobacterium marismortui).